A 502-amino-acid polypeptide reads, in one-letter code: Probable cytosol aminopeptidase (502 aa).

Mn(2+) contacts are provided by K269 and D274. Residue K281 is part of the active site. Positions 292, 351, and 353 each coordinate Mn(2+). The active site involves R355.

It belongs to the peptidase M17 family. Mn(2+) is required as a cofactor.

The protein localises to the cytoplasm. It carries out the reaction Release of an N-terminal amino acid, Xaa-|-Yaa-, in which Xaa is preferably Leu, but may be other amino acids including Pro although not Arg or Lys, and Yaa may be Pro. Amino acid amides and methyl esters are also readily hydrolyzed, but rates on arylamides are exceedingly low.. The catalysed reaction is Release of an N-terminal amino acid, preferentially leucine, but not glutamic or aspartic acids.. Functionally, presumably involved in the processing and regular turnover of intracellular proteins. Catalyzes the removal of unsubstituted N-terminal amino acids from various peptides. This Vibrio parahaemolyticus serotype O3:K6 (strain RIMD 2210633) protein is Probable cytosol aminopeptidase.